We begin with the raw amino-acid sequence, 877 residues long: Leucine--tRNA ligase (877 aa).

Positions 48–58 (PYPSGKLHMGH) match the 'HIGH' region motif. Residues 636-640 (KMSKS) carry the 'KMSKS' region motif. Residue K639 coordinates ATP.

The protein belongs to the class-I aminoacyl-tRNA synthetase family.

The protein resides in the cytoplasm. It carries out the reaction tRNA(Leu) + L-leucine + ATP = L-leucyl-tRNA(Leu) + AMP + diphosphate. This chain is Leucine--tRNA ligase, found in Ralstonia pickettii (strain 12J).